The sequence spans 353 residues: Small ribosomal subunit protein uS2 (353 aa).

A disordered region spans residues 256 to 353 (DTDEQSSAAN…TPAESTDEQA (98 aa)). 2 stretches are compositionally biased toward low complexity: residues 263–311 (AANT…AEAP) and 321–339 (ESAT…TPAE). The span at 340–353 (AEAETPAESTDEQA) shows a compositional bias: acidic residues.

Belongs to the universal ribosomal protein uS2 family.

The protein is Small ribosomal subunit protein uS2 of Beutenbergia cavernae (strain ATCC BAA-8 / DSM 12333 / CCUG 43141 / JCM 11478 / NBRC 16432 / NCIMB 13614 / HKI 0122).